The sequence spans 508 residues: MAP kinase kinase MKK1/SSP32 (508 aa).

Disordered stretches follow at residues 1–21, 35–95, and 130–158; these read MASL…PRLK, IYLT…LSIN, and ELSG…YLRN. Residues 35 to 47 show a composition bias toward polar residues; the sequence is IYLTSNGSSTTAY. The span at 48–66 shows a compositional bias: low complexity; sequence SSHTPEPLTSSTSTLFSQT. Composition is skewed to polar residues over residues 67–79 and 131–158; these read RLHP…TLNT and LSGN…YLRN. Residue Ser192 is modified to Phosphoserine. Residues 221–488 enclose the Protein kinase domain; sequence IETLGILGEG…PRQMINHPWI (268 aa). ATP contacts are provided by residues 227–235 and Lys250; that span reads LGEGAGGSV. Residue Asp349 is the Proton acceptor of the active site.

Belongs to the protein kinase superfamily. STE Ser/Thr protein kinase family. MAP kinase kinase subfamily.

The enzyme catalyses L-seryl-[protein] + ATP = O-phospho-L-seryl-[protein] + ADP + H(+). It catalyses the reaction L-threonyl-[protein] + ATP = O-phospho-L-threonyl-[protein] + ADP + H(+). The catalysed reaction is L-tyrosyl-[protein] + ATP = O-phospho-L-tyrosyl-[protein] + ADP + H(+). Its function is as follows. Involved in a signal transduction pathway that play a role in yeast cell morphogenesis and cell growth. This pathway seems to start by SMP3; then involve the kinase PKC1 that may act on the BCK1 kinase that then phosphorylates MKK1 and MKK2 which themselves phosphorylate the MPK1 kinase. The chain is MAP kinase kinase MKK1/SSP32 (MKK1) from Saccharomyces cerevisiae (strain ATCC 204508 / S288c) (Baker's yeast).